Here is a 261-residue protein sequence, read N- to C-terminus: Cytochrome c oxidase subunit 3 (261 aa).

Residues 1-15 lie on the Mitochondrial matrix side of the membrane; the sequence is MTHQTHAYHMVNPSP. A helical transmembrane segment spans residues 16–34; it reads WPLTGALSALLMTSGLAMW. The Mitochondrial intermembrane segment spans residues 35-40; the sequence is FHFNST. The chain crosses the membrane as a helical span at residues 41-66; the sequence is LLLAMGLLTNILTMYQWWRDIIREST. Over 67-72 the chain is Mitochondrial matrix; it reads FQGHHT. The helical transmembrane segment at 73–105 threads the bilayer; sequence SIVQKGLRYGMILFIISEVFFFSGFFWAFYHSS. Residues 106–128 are Mitochondrial intermembrane-facing; that stretch reads LAPTPELGGCWPPTGIHPLNPLE. Residues 129-152 form a helical membrane-spanning segment; that stretch reads VPLLNTSVLLASGVSITWAHHSLM. The Mitochondrial matrix portion of the chain corresponds to 153–155; the sequence is EGN. A helical transmembrane segment spans residues 156–183; the sequence is RKNMLQGLFITISLGVYFTLLQASEYYE. At 184 to 190 the chain is on the mitochondrial intermembrane side; the sequence is ASFTISD. A helical transmembrane segment spans residues 191-223; it reads GVYGSTFFVATGFHGLHVIIGSTFLIVCFLRQL. The Mitochondrial matrix portion of the chain corresponds to 224 to 232; that stretch reads KFHFTSSHH. The helical transmembrane segment at 233 to 256 threads the bilayer; the sequence is FGFEAAAWYWHFVDVVWLFLYVSI. The Mitochondrial intermembrane portion of the chain corresponds to 257-261; sequence YWWGS.

The protein belongs to the cytochrome c oxidase subunit 3 family. As to quaternary structure, component of the cytochrome c oxidase (complex IV, CIV), a multisubunit enzyme composed of 14 subunits. The complex is composed of a catalytic core of 3 subunits MT-CO1, MT-CO2 and MT-CO3, encoded in the mitochondrial DNA, and 11 supernumerary subunits COX4I, COX5A, COX5B, COX6A, COX6B, COX6C, COX7A, COX7B, COX7C, COX8 and NDUFA4, which are encoded in the nuclear genome. The complex exists as a monomer or a dimer and forms supercomplexes (SCs) in the inner mitochondrial membrane with NADH-ubiquinone oxidoreductase (complex I, CI) and ubiquinol-cytochrome c oxidoreductase (cytochrome b-c1 complex, complex III, CIII), resulting in different assemblies (supercomplex SCI(1)III(2)IV(1) and megacomplex MCI(2)III(2)IV(2)).

The protein localises to the mitochondrion inner membrane. The enzyme catalyses 4 Fe(II)-[cytochrome c] + O2 + 8 H(+)(in) = 4 Fe(III)-[cytochrome c] + 2 H2O + 4 H(+)(out). In terms of biological role, component of the cytochrome c oxidase, the last enzyme in the mitochondrial electron transport chain which drives oxidative phosphorylation. The respiratory chain contains 3 multisubunit complexes succinate dehydrogenase (complex II, CII), ubiquinol-cytochrome c oxidoreductase (cytochrome b-c1 complex, complex III, CIII) and cytochrome c oxidase (complex IV, CIV), that cooperate to transfer electrons derived from NADH and succinate to molecular oxygen, creating an electrochemical gradient over the inner membrane that drives transmembrane transport and the ATP synthase. Cytochrome c oxidase is the component of the respiratory chain that catalyzes the reduction of oxygen to water. Electrons originating from reduced cytochrome c in the intermembrane space (IMS) are transferred via the dinuclear copper A center (CU(A)) of subunit 2 and heme A of subunit 1 to the active site in subunit 1, a binuclear center (BNC) formed by heme A3 and copper B (CU(B)). The BNC reduces molecular oxygen to 2 water molecules using 4 electrons from cytochrome c in the IMS and 4 protons from the mitochondrial matrix. The protein is Cytochrome c oxidase subunit 3 (MT-CO3) of Equus caballus (Horse).